The primary structure comprises 155 residues: Transcriptional repressor NrdR (155 aa).

Residues 3 to 34 fold into a zinc finger; the sequence is CPYCGHLEDRVVDSRETQDGQATRRRRACLSC. An ATP-cone domain is found at 49–139; it reads PQVVKKDGRR…VYRAFRDVGE (91 aa).

The protein belongs to the NrdR family. It depends on Zn(2+) as a cofactor.

Negatively regulates transcription of bacterial ribonucleotide reductase nrd genes and operons by binding to NrdR-boxes. This is Transcriptional repressor NrdR from Anaeromyxobacter dehalogenans (strain 2CP-1 / ATCC BAA-258).